The sequence spans 345 residues: Holliday junction branch migration complex subunit RuvB (345 aa).

The tract at residues 1–183 (MTTQRLVSAA…FGIVHRLEFY (183 aa)) is large ATPase domain (RuvB-L). ATP-binding positions include I22, R23, G64, K67, T68, T69, 130–132 (EDY), R173, Y183, and R220. T68 serves as a coordination point for Mg(2+). The tract at residues 184–254 (SVEELSRIVA…VAGKALEMLD (71 aa)) is small ATPAse domain (RuvB-S). The segment at 257-345 (PNGFDQSDRR…NVNEELFGDE (89 aa)) is head domain (RuvB-H). R293, R312, and R317 together coordinate DNA.

This sequence belongs to the RuvB family. In terms of assembly, homohexamer. Forms an RuvA(8)-RuvB(12)-Holliday junction (HJ) complex. HJ DNA is sandwiched between 2 RuvA tetramers; dsDNA enters through RuvA and exits via RuvB. An RuvB hexamer assembles on each DNA strand where it exits the tetramer. Each RuvB hexamer is contacted by two RuvA subunits (via domain III) on 2 adjacent RuvB subunits; this complex drives branch migration. In the full resolvosome a probable DNA-RuvA(4)-RuvB(12)-RuvC(2) complex forms which resolves the HJ.

Its subcellular location is the cytoplasm. It catalyses the reaction ATP + H2O = ADP + phosphate + H(+). The RuvA-RuvB-RuvC complex processes Holliday junction (HJ) DNA during genetic recombination and DNA repair, while the RuvA-RuvB complex plays an important role in the rescue of blocked DNA replication forks via replication fork reversal (RFR). RuvA specifically binds to HJ cruciform DNA, conferring on it an open structure. The RuvB hexamer acts as an ATP-dependent pump, pulling dsDNA into and through the RuvAB complex. RuvB forms 2 homohexamers on either side of HJ DNA bound by 1 or 2 RuvA tetramers; 4 subunits per hexamer contact DNA at a time. Coordinated motions by a converter formed by DNA-disengaged RuvB subunits stimulates ATP hydrolysis and nucleotide exchange. Immobilization of the converter enables RuvB to convert the ATP-contained energy into a lever motion, pulling 2 nucleotides of DNA out of the RuvA tetramer per ATP hydrolyzed, thus driving DNA branch migration. The RuvB motors rotate together with the DNA substrate, which together with the progressing nucleotide cycle form the mechanistic basis for DNA recombination by continuous HJ branch migration. Branch migration allows RuvC to scan DNA until it finds its consensus sequence, where it cleaves and resolves cruciform DNA. In Methylococcus capsulatus (strain ATCC 33009 / NCIMB 11132 / Bath), this protein is Holliday junction branch migration complex subunit RuvB.